The following is a 142-amino-acid chain: METLAAINRWLAKQHVVTWCVHHEGELWCANAFYYYDPDRVAFYVLSEDKTRHAQMTGTRAKVAGTINGQPKNVALIRGVQFQGEIRRLEGEESDSMRRQYTRRFPVALALSAPVWEIRPDELKFTDNTLGFGKKLHWLRAE.

The protein belongs to the UPF0306 family.

This is UPF0306 protein Ent638_3591 from Enterobacter sp. (strain 638).